The following is a 452-amino-acid chain: Phosphoglucosamine mutase (452 aa).

The active-site Phosphoserine intermediate is Ser104. Ser104, Asp245, Asp247, and Asp249 together coordinate Mg(2+). The residue at position 104 (Ser104) is a Phosphoserine.

The protein belongs to the phosphohexose mutase family. It depends on Mg(2+) as a cofactor. Post-translationally, activated by phosphorylation.

It catalyses the reaction alpha-D-glucosamine 1-phosphate = D-glucosamine 6-phosphate. Its function is as follows. Catalyzes the conversion of glucosamine-6-phosphate to glucosamine-1-phosphate. The polypeptide is Phosphoglucosamine mutase (Gluconacetobacter diazotrophicus (strain ATCC 49037 / DSM 5601 / CCUG 37298 / CIP 103539 / LMG 7603 / PAl5)).